Reading from the N-terminus, the 388-residue chain is MHLHEYQAKDLLSSYDIAIPPYRIVSSVEEGELVLRELGINAGVVKVQVHAGGRGKNGGVIIAKSSSEILAAIGKLLKMRFESNQTSGESLPVEKVLITPLVNIASEYYLAVIMDRKNRCPAIMLSKAGGMDIEEVAQKYPDQLLTVPLTPSARIYNYQLRQIIKFMNWEGDTGKQGVQLIKKLVQCFYDNDASLLEINPLVLTQEEELLVLDAKVTIDDNALYRHPKLEVLYDPSQENVRDVLAKKIGLSYIALDGDIGCLVNGAGLAMSTLDILKIHGGSAANFLDVGGSATEQQIQEAVSLVLSDENVEVLFINIFGGIMDCSAVASGLVAVMQTRENLIPTVVRLEGTNVELGKEIVQRSGIPCQFTDSLNEGARLAVALSKQV.

The 236-residue stretch at Lys-9–Leu-244 folds into the ATP-grasp domain. Residues Lys-46, Gly-53–Gly-55, Val-102, and Glu-107 contribute to the ATP site. Residues Asn-199 and Asp-213 each contribute to the Mg(2+) site. Substrate-binding positions include Asn-264 and Gly-321–Met-323.

It belongs to the succinate/malate CoA ligase beta subunit family. Heterotetramer of two alpha and two beta subunits. It depends on Mg(2+) as a cofactor.

It catalyses the reaction succinate + ATP + CoA = succinyl-CoA + ADP + phosphate. The enzyme catalyses GTP + succinate + CoA = succinyl-CoA + GDP + phosphate. It participates in carbohydrate metabolism; tricarboxylic acid cycle; succinate from succinyl-CoA (ligase route): step 1/1. Succinyl-CoA synthetase functions in the citric acid cycle (TCA), coupling the hydrolysis of succinyl-CoA to the synthesis of either ATP or GTP and thus represents the only step of substrate-level phosphorylation in the TCA. The beta subunit provides nucleotide specificity of the enzyme and binds the substrate succinate, while the binding sites for coenzyme A and phosphate are found in the alpha subunit. This is Succinate--CoA ligase [ADP-forming] subunit beta from Chlamydia felis (strain Fe/C-56) (Chlamydophila felis).